We begin with the raw amino-acid sequence, 138 residues long: MERTFAMIKPDGVRRGLTPEILARIQKKGYRVVGLKQMLISRELAERHYAEHRERPFFGELVDFITSGPVVAIALEGENAIAGWRAMMGATNPANAAPGTIRADFATTTGENVTHGSDSPESAARELSLFFREDELLK.

Positions 9, 57, 85, 91, 102, and 112 each coordinate ATP. The active-site Pros-phosphohistidine intermediate is histidine 115.

This sequence belongs to the NDK family. In terms of assembly, homotetramer. Requires Mg(2+) as cofactor.

The protein resides in the cytoplasm. The catalysed reaction is a 2'-deoxyribonucleoside 5'-diphosphate + ATP = a 2'-deoxyribonucleoside 5'-triphosphate + ADP. The enzyme catalyses a ribonucleoside 5'-diphosphate + ATP = a ribonucleoside 5'-triphosphate + ADP. Its function is as follows. Major role in the synthesis of nucleoside triphosphates other than ATP. The ATP gamma phosphate is transferred to the NDP beta phosphate via a ping-pong mechanism, using a phosphorylated active-site intermediate. This Deinococcus geothermalis (strain DSM 11300 / CIP 105573 / AG-3a) protein is Nucleoside diphosphate kinase.